The chain runs to 202 residues: Imidazoleglycerol-phosphate dehydratase (202 aa).

It belongs to the imidazoleglycerol-phosphate dehydratase family.

It localises to the cytoplasm. The enzyme catalyses D-erythro-1-(imidazol-4-yl)glycerol 3-phosphate = 3-(imidazol-4-yl)-2-oxopropyl phosphate + H2O. It functions in the pathway amino-acid biosynthesis; L-histidine biosynthesis; L-histidine from 5-phospho-alpha-D-ribose 1-diphosphate: step 6/9. In Sinorhizobium medicae (strain WSM419) (Ensifer medicae), this protein is Imidazoleglycerol-phosphate dehydratase.